The primary structure comprises 209 residues: Orotate phosphoribosyltransferase (209 aa).

5-phospho-alpha-D-ribose 1-diphosphate contacts are provided by residues arginine 96, lysine 100, histidine 102, and 122–130; that span reads EDLISTGGS. Orotate is bound at residue serine 126.

Belongs to the purine/pyrimidine phosphoribosyltransferase family. PyrE subfamily. As to quaternary structure, homodimer. Mg(2+) is required as a cofactor.

It catalyses the reaction orotidine 5'-phosphate + diphosphate = orotate + 5-phospho-alpha-D-ribose 1-diphosphate. Its pathway is pyrimidine metabolism; UMP biosynthesis via de novo pathway; UMP from orotate: step 1/2. Catalyzes the transfer of a ribosyl phosphate group from 5-phosphoribose 1-diphosphate to orotate, leading to the formation of orotidine monophosphate (OMP). The polypeptide is Orotate phosphoribosyltransferase (Streptococcus pyogenes serotype M5 (strain Manfredo)).